We begin with the raw amino-acid sequence, 358 residues long: MAVKWTGGHSSPILCLNASQEGLVASGAEGGDLVVWGEDGTLLGHTCFQGAEDVTNVLFSPSCPTKLYASHGETISILDVRSLKEPLDDFHVNEEEINCLSLNETENLLASADDSGTIKILDLENKKISRSLKRHSNICSSVAFRPQRPQSLVSCGLDMQVMLWNLRKARPLWITNLQEDETEEMESPQSPGQLLNPALAHSVSVASCGNVFSCGAEDGKVRIFRVMGVKCEQELGFKGHSLGVSQVCFLRESYLLLTGGNDGKIKLWDVSSEIEKKHKSPTKHTHRKKTKRAAYTKQGGGTHASVTGEDEHGKILPKLSIEHGEKVNWLLSTKIKGYRNILVADQTSCISVYPLKEF.

WD repeat units lie at residues 8–46 (GHSS…LGHT), 92–131 (VNEE…ISRS), 134–174 (RHSN…PLWI), 195–234 (LNPA…CEQE), and 239–278 (GHSL…EKKH). Over residues 278–294 (HKSPTKHTHRKKTKRAA) the composition is skewed to basic residues. The tract at residues 278–309 (HKSPTKHTHRKKTKRAAYTKQGGGTHASVTGE) is disordered.

It belongs to the WD repeat WDR53 family.

The chain is WD repeat-containing protein 53 (WDR53) from Bos taurus (Bovine).